The following is an 87-amino-acid chain: DNA-directed RNA polymerase subunit omega (87 aa).

Belongs to the RNA polymerase subunit omega family. The RNAP catalytic core consists of 2 alpha, 1 beta, 1 beta' and 1 omega subunit. When a sigma factor is associated with the core the holoenzyme is formed, which can initiate transcription.

It carries out the reaction RNA(n) + a ribonucleoside 5'-triphosphate = RNA(n+1) + diphosphate. Functionally, promotes RNA polymerase assembly. Latches the N- and C-terminal regions of the beta' subunit thereby facilitating its interaction with the beta and alpha subunits. This Azotobacter vinelandii (strain DJ / ATCC BAA-1303) protein is DNA-directed RNA polymerase subunit omega.